We begin with the raw amino-acid sequence, 1103 residues long: MNKKHSSPAQKKISQQVVFQRRINASKNIEQASNVCFSVLAKSMRKDSFTEFLYMFRNFLDLPVAKNIMNYRYKGDTIDIFNIKTMPFEMLEIRDVVKWLTEIFGYFSEDLNDFVKAKVAITNNILLADFEGAKRNLEKFIDDHGVCNWTIATELSLLYFQGKITEYKDKIKEFTHIEDGLSQSFLTYEGIRCNPSVTSERYRFSIGKMIEEVRIDNQPQLEETIKYRHDFSPCDVYSNMDFIFSNTCEKRIFDMYNSFKRFIFYKYNDGSDISEIVTCVEKLTNSIHDSEIEIFYKRISGTESDIKDEQYNEVIDNYINNNYERVITQSEKILLEKPYFSVIYLPYIKSLVRKKQNTSLPGPIGEIIRLSCNLFSNIEFEDSLKKLSKIYYVLLHNDWVHIIGCILDNFDGSDGINNPKRYNYVDSLLLINNKLSFRDSTNFKWLDDENISAWRRDKIKADKYFYDGEYGKALNLYSNSLDKSEKNYIEELKAKIIYCHFSLGEISVAITILSELLSKGANPRTLPINTVAEYVAKEGHYKTNNDELYNEAIILNAYNKNIIAKYIQHTSNVCENFLENIDVTDKNQITFENESIPAFFLTELLSIDVLEGMTSIIESEVDVLLTRLNIDRYIVTNEEKFDSKTVRKSKNEITNIFYKLIVQACSNEAGEGRIYVDKSSLKAKLINDVERELEILRGSDNKELNTYVELTDDHGIEYHTMSTPFMRDVFDLMMKVSDGYTIDKLYGIDQSLNVGIRHGGIVNLLWAPLKNNGIAALKSKDSKFIPNPVWRNDFGYYNKGFLDSIDKNLVLLNEKLNTIINDAKEKVHINTGEFIESAKVFNYAIEIEFVEEMAGSIDKIDGDTFIELIFNYLDEKTNDCLDYAKNNFIPKLRHEMIDAIQNTRNEIKIENINRAISQSKIQLEESIEFLQSWFNWSGTSKTPFALKAAIEKSRLILSKLHPWLEINFSGSLNTQKIFLGKHFTPIVTLLTLIFENVVKHGANRDSTEIIVDINENNDVIELSFVNKVQEPFNQDELEKFSRINEILDTEYETYSARETGSGIFKIKKILSLELKCKNHVHIHPTENSFGITIGIYDNGGMFE.

Histidine 758 carries the phosphohistidine; by autocatalysis modification. The stretch at 818 to 851 (TIINDAKEKVHINTGEFIESAKVFNYAIEIEFVE) is one TPR repeat.

Autophosphorylated.

The catalysed reaction is ATP + protein L-histidine = ADP + protein N-phospho-L-histidine.. In terms of biological role, sensor-kinase member of the two-component regulatory system Detocs that confers resistance to bacteriophage. When the system (DtcA-DtcB-DtcC) is expressed in a susceptible E.coli (strain MG1655) it confers resistance to bacteriophages T2, T4, T5, T7, SECphi4, SECphi6 and SECphi27; the level of resistance varies, resistance to T2, T7 and SECphi4 is not very high. DtcA (this subunit) probably autophosphorylates upon sensing viral infection, and subsequently transfers the phosphate signal to DtcC which activates it, leading to an antiviral defense; DtcB may scavenge phosphorylation signals from accidental activation of DtcA. This chain is Detocs histidine-protein kinase DtcA, found in Enterobacter cloacae (strain JD6301).